The sequence spans 364 residues: Spermidine/putrescine import ATP-binding protein PotA (364 aa).

Residues 5 to 235 form the ABC transporter domain; that stretch reads LSLKSVSKSY…PVNRFVADFI (231 aa). 37 to 44 lines the ATP pocket; it reads GPSGCGKT.

Belongs to the ABC transporter superfamily. Spermidine/putrescine importer (TC 3.A.1.11.1) family. In terms of assembly, the complex is composed of two ATP-binding proteins (PotA), two transmembrane proteins (PotB and PotC) and a solute-binding protein (PotD).

It localises to the cell membrane. It carries out the reaction ATP + H2O + polyamine-[polyamine-binding protein]Side 1 = ADP + phosphate + polyamineSide 2 + [polyamine-binding protein]Side 1.. Part of the ABC transporter complex PotABCD involved in spermidine/putrescine import. Responsible for energy coupling to the transport system. The protein is Spermidine/putrescine import ATP-binding protein PotA of Staphylococcus aureus (strain USA300).